Consider the following 53-residue polypeptide: Bowman-Birk type proteinase inhibitor 1 (53 aa).

5 disulfides stabilise this stretch: Cys9-Cys24, Cys12-Cys51, Cys14-Cys22, Cys31-Cys38, and Cys40-Cys48.

Dimer.

Its function is as follows. Inhibits trypsin (IC(50)=6.20 nM), neutrophil elastase (ELANE) and, to a lesser extent, alpha-chymotrypsin (IC(50)=3.44 uM). This chain is Bowman-Birk type proteinase inhibitor 1, found in Lathyrus sativus (White vetchling).